We begin with the raw amino-acid sequence, 1446 residues long: E3 ubiquitin-protein ligase listerin (1446 aa).

HEAT repeat units follow at residues 71–108 (QTRE…LTTD), 115–153 (MLTM…VTNG), 324–361 (SLQK…LLQK), 363–399 (ENPA…TFSD), 413–450 (EILK…WIIE), 630–669 (AENV…AEDE), 684–721 (GDFE…FCDA), 1046–1083 (LRAL…PAFQ), 1107–1144 (SVAR…KLSL), 1165–1202 (LLDL…NALN), and 1251–1289 (FKSM…RLLI). The RING-type zinc finger occupies 1395 to 1442 (CTICMMTVHQQTHQLPKIKCKQCKNKFHSNCLYKWFESSNQSTCPLCR).

Belongs to the LTN1 family. In terms of assembly, component of the ribosome quality control complex (RQC), composed of at least the E3 ubiquitin ligase ltn1 and nemf. The complex probably also contains tcf25 as well as vcp/p97 and its ubiquitin-binding cofactors. RQC forms a stable complex with 60S ribosomal subunits.

It localises to the cytoplasm. It is found in the cytosol. It carries out the reaction S-ubiquitinyl-[E2 ubiquitin-conjugating enzyme]-L-cysteine + [acceptor protein]-L-lysine = [E2 ubiquitin-conjugating enzyme]-L-cysteine + N(6)-ubiquitinyl-[acceptor protein]-L-lysine.. It participates in protein modification; protein ubiquitination. Functionally, E3 ubiquitin-protein ligase. Component of the ribosome quality control complex (RQC), a ribosome-associated complex that mediates ubiquitination and extraction of incompletely synthesized nascent chains for proteasomal degradation. Ubiquitination leads to vcp/p97 recruitment for extraction and degradation of the incomplete translation product. The chain is E3 ubiquitin-protein ligase listerin from Caenorhabditis elegans.